We begin with the raw amino-acid sequence, 428 residues long: MGNCHTVGPNEALVVSGGCCGSDYKQYVFGGWAWAWWCISDTQRISLEIMTLQPRCEDVETAEGVALTVTGVAQVKIMTEKELLAVACEQFLGKNVQDIKNVVLQTLEGHLRSILGTLTVEQIYQDRDQFAKLVREVAAPDVGRMGIEILSFTIKDVYDKVDYLSSLGKTQTAVVQRDADIGVAEAERDAGIREAECKKEMLDVKFMADTKIADSKRAFELQKSAFSEEVNIKTAEAQLAYELQGAREQQKIRQEEIEIEVVQRKKQIAVEAQEILRTDKELIATVRRPAEAEAHRIQQIAEGEKVKQVLLAQAEAEKIRKIGEAEAAVIEAMGKAEAERMKLKAEAYQKYGDAAKMALVLEALPQIAAKIAAPLTKVDEIVVLSGDNSKVTSEVNRLLAELPASVHALTGVDLSKIPLIKKATGVQV.

Gly2 carries the N-myristoyl glycine lipid modification. The S-palmitoyl cysteine; by ZDHHC5 moiety is linked to residue Cys4. Cys19 carries S-palmitoyl cysteine lipidation. The S-palmitoyl cysteine; by ZDHHC5 moiety is linked to residue Cys20. Ser405 is modified (phosphoserine).

The protein belongs to the band 7/mec-2 family. Flotillin subfamily. In terms of assembly, heterooligomeric complex of flotillin-1 and flotillin-2 and caveolin-1 and caveolin-2. Interacts with ECPAS. Post-translationally, ZDHHC5-catalyzed palmitoylation predominantly occurs at Cys-4. ZDHHC5-catalyzed palmitoylation may be required for the formation of higher-order complexes and for neurite outgrowth in cultured neural stem cells. As to expression, in skin, expressed in epidermis and epidermal appendages but not in dermis. Expressed in all layers of the epidermis except the basal layer. In hair follicles, expressed in the suprabasal layer but not the basal layer. Also expressed in melanoma and carcinoma cell lines, fibroblasts and foreskin melanocytes.

The protein localises to the cell membrane. The protein resides in the membrane. It localises to the caveola. Its subcellular location is the endosome. May act as a scaffolding protein within caveolar membranes, functionally participating in formation of caveolae or caveolae-like vesicles. May be involved in epidermal cell adhesion and epidermal structure and function. This Homo sapiens (Human) protein is Flotillin-2 (FLOT2).